A 341-amino-acid chain; its full sequence is Phosphoribosylformylglycinamidine cyclo-ligase (341 aa).

This sequence belongs to the AIR synthase family.

The protein resides in the cytoplasm. It carries out the reaction 2-formamido-N(1)-(5-O-phospho-beta-D-ribosyl)acetamidine + ATP = 5-amino-1-(5-phospho-beta-D-ribosyl)imidazole + ADP + phosphate + H(+). It participates in purine metabolism; IMP biosynthesis via de novo pathway; 5-amino-1-(5-phospho-D-ribosyl)imidazole from N(2)-formyl-N(1)-(5-phospho-D-ribosyl)glycinamide: step 2/2. This is Phosphoribosylformylglycinamidine cyclo-ligase from Synechocystis sp. (strain ATCC 27184 / PCC 6803 / Kazusa).